The primary structure comprises 238 residues: 2-C-methyl-D-erythritol 4-phosphate cytidylyltransferase (238 aa).

It belongs to the IspD/TarI cytidylyltransferase family. IspD subfamily.

The enzyme catalyses 2-C-methyl-D-erythritol 4-phosphate + CTP + H(+) = 4-CDP-2-C-methyl-D-erythritol + diphosphate. The protein operates within isoprenoid biosynthesis; isopentenyl diphosphate biosynthesis via DXP pathway; isopentenyl diphosphate from 1-deoxy-D-xylulose 5-phosphate: step 2/6. Its function is as follows. Catalyzes the formation of 4-diphosphocytidyl-2-C-methyl-D-erythritol from CTP and 2-C-methyl-D-erythritol 4-phosphate (MEP). The chain is 2-C-methyl-D-erythritol 4-phosphate cytidylyltransferase from Pelotomaculum thermopropionicum (strain DSM 13744 / JCM 10971 / SI).